Here is a 395-residue protein sequence, read N- to C-terminus: Major outer membrane protein P.IA (395 aa).

An N-terminal signal peptide occupies residues 1–19 (MRKKLTALVLSALPLAAVA).

The protein belongs to the Gram-negative porin family. As to quaternary structure, homotrimer.

The protein resides in the cell outer membrane. Serves as a slightly cation selective porin. Major antigen on the gonococcal cell surface and it may have pathogenic properties in addition to its porin activity. This chain is Major outer membrane protein P.IA (porA), found in Neisseria meningitidis serogroup A / serotype 4A (strain DSM 15465 / Z2491).